The sequence spans 560 residues: DNA ligase B (560 aa).

Lysine 124 (N6-AMP-lysine intermediate) is an active-site residue.

Belongs to the NAD-dependent DNA ligase family. LigB subfamily.

The catalysed reaction is NAD(+) + (deoxyribonucleotide)n-3'-hydroxyl + 5'-phospho-(deoxyribonucleotide)m = (deoxyribonucleotide)n+m + AMP + beta-nicotinamide D-nucleotide.. Catalyzes the formation of phosphodiester linkages between 5'-phosphoryl and 3'-hydroxyl groups in double-stranded DNA using NAD as a coenzyme and as the energy source for the reaction. This chain is DNA ligase B, found in Citrobacter koseri (strain ATCC BAA-895 / CDC 4225-83 / SGSC4696).